The following is a 157-amino-acid chain: MRTTIHKVITMMKGLIIVLKHAFQTPVTLRYPEEKRILPARSRGRHYLTKWNDGLERCVGCELCAIVCPAQAIYVKPAANEPGHIHSHGERYASDFQINMLRCIFCGYCEEACPTGAIVLSNQYELSAYTREDMIYTKDRLTEKTPGESGRDPSREI.

2 4Fe-4S ferredoxin-type domains span residues 47 to 78 (YLTKWNDGLERCVGCELCAIVCPAQAIYVKPA) and 94 to 123 (SDFQINMLRCIFCGYCEEACPTGAIVLSNQ). [4Fe-4S] cluster-binding residues include C58, C61, C64, C68, C103, C106, C109, and C113.

Belongs to the complex I 23 kDa subunit family. NDH-1 is composed of 14 different subunits. Subunits NuoA, H, J, K, L, M, N constitute the membrane sector of the complex. Requires [4Fe-4S] cluster as cofactor.

Its subcellular location is the cell inner membrane. The enzyme catalyses a quinone + NADH + 5 H(+)(in) = a quinol + NAD(+) + 4 H(+)(out). In terms of biological role, NDH-1 shuttles electrons from NADH, via FMN and iron-sulfur (Fe-S) centers, to quinones in the respiratory chain. The immediate electron acceptor for the enzyme in this species is believed to be ubiquinone. Couples the redox reaction to proton translocation (for every two electrons transferred, four hydrogen ions are translocated across the cytoplasmic membrane), and thus conserves the redox energy in a proton gradient. The polypeptide is NADH-quinone oxidoreductase subunit I (nuoI) (Protochlamydia amoebophila (strain UWE25)).